The primary structure comprises 73 residues: NAD(P)H-quinone oxidoreductase subunit L (73 aa).

Transmembrane regions (helical) follow at residues 6–26 and 44–64; these read SLIG…LPLL and VLMF…APFM.

Belongs to the complex I NdhL subunit family. As to quaternary structure, NDH-1 can be composed of about 15 different subunits; different subcomplexes with different compositions have been identified which probably have different functions.

Its subcellular location is the cellular thylakoid membrane. The catalysed reaction is a plastoquinone + NADH + (n+1) H(+)(in) = a plastoquinol + NAD(+) + n H(+)(out). The enzyme catalyses a plastoquinone + NADPH + (n+1) H(+)(in) = a plastoquinol + NADP(+) + n H(+)(out). NDH-1 shuttles electrons from an unknown electron donor, via FMN and iron-sulfur (Fe-S) centers, to quinones in the respiratory and/or the photosynthetic chain. The immediate electron acceptor for the enzyme in this species is believed to be plastoquinone. Couples the redox reaction to proton translocation, and thus conserves the redox energy in a proton gradient. Cyanobacterial NDH-1 also plays a role in inorganic carbon-concentration. The chain is NAD(P)H-quinone oxidoreductase subunit L from Synechococcus sp. (strain JA-2-3B'a(2-13)) (Cyanobacteria bacterium Yellowstone B-Prime).